The primary structure comprises 371 residues: DNA replication and repair protein RecF (371 aa).

Gly-30 to Thr-37 is a binding site for ATP.

The protein belongs to the RecF family.

The protein localises to the cytoplasm. In terms of biological role, the RecF protein is involved in DNA metabolism; it is required for DNA replication and normal SOS inducibility. RecF binds preferentially to single-stranded, linear DNA. It also seems to bind ATP. The polypeptide is DNA replication and repair protein RecF (Acidothermus cellulolyticus (strain ATCC 43068 / DSM 8971 / 11B)).